The primary structure comprises 22 residues: Myofibril-bound serine protease (22 aa).

The 22-residue stretch at 1–22 (IVGGYECEAYSKPYQVSINLGY) folds into the Peptidase S1 domain.

The protein belongs to the peptidase S1 family. As to expression, detected in skeletal muscle (at protein level).

The protein resides in the cytoplasm. Serine protease which degrades the myosin heavy chain and tropomyosin, but not actin. Selectively cleaves Arg-|-Xaa bonds. The sequence is that of Myofibril-bound serine protease from Saurida undosquamis (Brushtooth lizardfish).